Here is a 278-residue protein sequence, read N- to C-terminus: 4-deoxy-L-threo-5-hexosulose-uronate ketol-isomerase (278 aa).

Zn(2+) contacts are provided by His-196, His-198, Glu-203, and His-245.

Belongs to the KduI family. It depends on Zn(2+) as a cofactor.

It catalyses the reaction 5-dehydro-4-deoxy-D-glucuronate = 3-deoxy-D-glycero-2,5-hexodiulosonate. Its pathway is glycan metabolism; pectin degradation; 2-dehydro-3-deoxy-D-gluconate from pectin: step 4/5. In terms of biological role, catalyzes the isomerization of 5-dehydro-4-deoxy-D-glucuronate to 3-deoxy-D-glycero-2,5-hexodiulosonate. The protein is 4-deoxy-L-threo-5-hexosulose-uronate ketol-isomerase of Yersinia enterocolitica serotype O:8 / biotype 1B (strain NCTC 13174 / 8081).